Consider the following 286-residue polypeptide: MARQVICWCFTLNNPLAPLSLHESMKYLVYQTEAGDNGTIHYQGYVEMKKRTSLVQMKKLLPGAHLEKRRGSQGEARAYAMKEDSRVEGPWEFGEFKEVLEDKLRSVMEDMKSTGKRPVEYIEDCCNTYDKSSATLREFRGELKKKQAIEEWQLQRQPWMDEVERLMETKDCRRIIWVYGPQGGEGKTSYAKHLVKTRDAFYSTGGKTADIAFAWDHQELVLFDFPRSFEEYVNYGVIEQLKNGIVQSGKYQSIVKYCNYVEVIVFANFIPRSGMFSEDRIVIVYA.

In terms of domain architecture, CRESS-DNA virus Rep endonuclease spans 2–96; that stretch reads ARQVICWCFT…VEGPWEFGEF (95 aa). Positions 9-12 match the RCR-1 motif; that stretch reads CFTL. Residues Glu-33 and His-41 each contribute to the a divalent metal cation site. The short motif at 41–43 is the RCR-2 element; that stretch reads HYQ. A Nuclear localization signal motif is present at residues 50–70; the sequence is KRTSLVQMKKLLPGAHLEKRR. Residue Tyr-79 is the For DNA cleavage activity of the active site. Positions 79 to 82 match the RCR-3 motif; sequence YAMK. Asp-84 lines the a divalent metal cation pocket. Positions 96 to 102 match the Nuclear localization signal motif; the sequence is FKEVLED. 180–188 provides a ligand contact to ATP; it reads GPQGGEGKT.

Belongs to the nanoviridea/circoviridae replication-associated protein family. In terms of assembly, homooligomer (Potential). Rep binds to repeated DNA motifs (iterons). Mg(2+) serves as cofactor. It depends on Mn(2+) as a cofactor.

Its subcellular location is the host nucleus. It catalyses the reaction ATP + H2O = ADP + phosphate + H(+). In terms of biological role, essential for the replication of all genomic viral ssDNA (trans-replication). The closed circular ssDNA genome is first converted to a superhelical dsDNA. Rep binds a specific hairpin at the genome origin of replication. Introduces an endonucleolytic nick within the conserved sequence 5'-A[GT]TATTAC-3' in the intergenic region of the genome, thereby initiating the rolling circle replication (RCR). Following cleavage, binds covalently to the 5'-phosphate of DNA as a tyrosyl ester. The cleavage gives rise to a free 3'-OH that serves as a primer for the cellular DNA polymerase. The polymerase synthesizes the (+) strand DNA by rolling circle mechanism. After one round of replication, a Rep-catalyzed nucleotidyl transfer reaction releases a circular single-stranded virus genome, thereby terminating the replication. Displays origin-specific DNA cleavage, nucleotidyl transferase, ATPase and helicase activities. The sequence is that of Master replication protein (DNA-R) from Subterranean clover stunt virus (strain F) (SCSV).